The chain runs to 122 residues: Large ribosomal subunit protein uL14 (122 aa).

Belongs to the universal ribosomal protein uL14 family. As to quaternary structure, part of the 50S ribosomal subunit. Forms a cluster with proteins L3 and L19. In the 70S ribosome, L14 and L19 interact and together make contacts with the 16S rRNA in bridges B5 and B8.

Its function is as follows. Binds to 23S rRNA. Forms part of two intersubunit bridges in the 70S ribosome. This chain is Large ribosomal subunit protein uL14, found in Pseudomonas paraeruginosa (strain DSM 24068 / PA7) (Pseudomonas aeruginosa (strain PA7)).